The chain runs to 323 residues: tRNA dimethylallyltransferase (323 aa).

Residue 12–19 participates in ATP binding; sequence GPTAAGKT. Position 14–19 (14–19) interacts with substrate; sequence TAAGKT. 2 interaction with substrate tRNA regions span residues 37–40 and 161–165; these read DSAL and QRLIR.

Belongs to the IPP transferase family. As to quaternary structure, monomer. The cofactor is Mg(2+).

The enzyme catalyses adenosine(37) in tRNA + dimethylallyl diphosphate = N(6)-dimethylallyladenosine(37) in tRNA + diphosphate. Catalyzes the transfer of a dimethylallyl group onto the adenine at position 37 in tRNAs that read codons beginning with uridine, leading to the formation of N6-(dimethylallyl)adenosine (i(6)A). The protein is tRNA dimethylallyltransferase of Pseudomonas savastanoi pv. phaseolicola (strain 1448A / Race 6) (Pseudomonas syringae pv. phaseolicola (strain 1448A / Race 6)).